A 464-amino-acid polypeptide reads, in one-letter code: RCC1-like G exchanging factor-like protein (464 aa).

Residues 1–37 constitute a mitochondrion transit peptide; it reads MALVALVAGARLGRRLSGPGLGRGHWTAAGRSRSRRE. RCC1 repeat units follow at residues 58-124, 128-191, 193-247, 248-300, 302-353, 354-411, and 412-461; these read ADRV…LSSK, VTKV…VLTD, EGVF…FLTD, KGEV…AVSA, GGLF…VLNG, EGHV…ALTN, and KGEL…TLAK.

In terms of assembly, forms a regulatory protein-RNA complex, consisting of RCC1L, NGRN, RPUSD3, RPUSD4, TRUB2, FASTKD2 and 16S mt-rRNA. Interacts with 16S mt-rRNA; this interaction is direct. Interacts with OPA1; this interaction is direct. As to quaternary structure, asociates with the mitochondrial ribosome large subunit (mt-LSU). Asociates with the mitochondrial ribosome small subunit (mt-SSU). Ubiquitous.

It localises to the mitochondrion membrane. The protein resides in the mitochondrion inner membrane. In terms of biological role, guanine nucleotide exchange factor (GEF) for mitochondrial dynamin-related GTPase OPA1. Activates OPA1, by exchanging bound GDP for free GTP, and drives OPA1 and MFN1-dependent mitochondrial fusion. Plays an essential role in mitochondrial ribosome biogenesis. As a component of a functional protein-RNA module, consisting of RCC1L, NGRN, RPUSD3, RPUSD4, TRUB2, FASTKD2 and 16S mitochondrial ribosomal RNA (16S mt-rRNA), controls 16S mt-rRNA abundance and is required for intra-mitochondrial translation of core subunits of the oxidative phosphorylation system. Plays an essential role in mitochondrial ribosome biogenesis via its association with GTPases that play a role in the assembly of the large ribosome subunit. Functionally, plays an essential role in mitochondrial ribosome biogenesis via its association with GTPases that play a role in the assembly of the small ribosome subunit. The sequence is that of RCC1-like G exchanging factor-like protein from Homo sapiens (Human).